The primary structure comprises 206 residues: Glutathione S-transferase 1 (206 aa).

Residues 2-79 enclose the GST N-terminal domain; that stretch reads PQYKLTYFDI…YLGRQFGLAG (78 aa). Glutathione is bound by residues tyrosine 8, tryptophan 39, lysine 43, 49–51, and 63–64; these read GQL and QS. The GST C-terminal domain maps to 81 to 206; that stretch reads TPMEEAQVDS…WIAERPKTPY (126 aa).

This sequence belongs to the GST superfamily. Sigma family.

It catalyses the reaction RX + glutathione = an S-substituted glutathione + a halide anion + H(+). Its function is as follows. Conjugation of reduced glutathione to a wide number of exogenous and endogenous hydrophobic electrophiles. Can also function as a GSH peroxidase. This is Glutathione S-transferase 1 (GST1) from Ascaris suum (Pig roundworm).